The following is a 524-amino-acid chain: 5'-AMP-activated protein kinase subunit gamma-2 (524 aa).

Residues 1-178 (MPLLDGDLEG…TRPPLASPTH (178 aa)) form a disordered region. 8 positions are modified to phosphoserine: serine 21, serine 27, serine 29, serine 46, serine 94, serine 99, serine 117, and serine 118. Low complexity predominate over residues 112–123 (TSGLSSSPSTPT). Threonine 121 carries the post-translational modification Phosphothreonine. The span at 135-145 (SYKHEPERLEN) shows a compositional bias: basic and acidic residues. Polar residues predominate over residues 148 to 168 (YASSSPPDTGQRFCPSSFQSP). The residue at position 152 (serine 152) is a Phosphoserine. 3 consecutive CBS domains span residues 230–290 (PTSS…KSPM), 312–370 (TFKP…MSDM), and 385–447 (IGTY…NLDI). Residues arginine 257, 272 to 277 (MLTITD), valine 317, 338 to 339 (HR), and lysine 357 contribute to the ADP site. AMP-binding positions include arginine 257, 272–277 (MLTITD), valine 317, histidine 338, 338–339 (HR), lysine 357, threonine 387, alanine 392, 413–414 (SA), 429–432 (SKFD), arginine 456, histidine 485, 485–486 (HR), and 501–504 (SLSD). Residues arginine 257, 272 to 277 (MLTITD), valine 317, 338 to 339 (HR), arginine 339, and lysine 357 contribute to the ATP site. Residues 325–346 (LLDAVYSLIKNKIHRLPVIDPI) carry the AMPK pseudosubstrate motif. ADP-binding positions include 429-432 (SKFD), arginine 456, and 485-486 (HR). ATP contacts are provided by residues 429 to 432 (SKFD), arginine 456, and 485 to 486 (HR). The CBS 4 domain maps to 459-517 (YFEGVVKCNKLEILETIVDRIVRAEVHRLVVANEADSIVGIISLSDILQALILTPAGAK).

It belongs to the 5'-AMP-activated protein kinase gamma subunit family. In terms of assembly, AMPK is a heterotrimer of an alpha catalytic subunit (PRKAA1 or PRKAA2), a beta (PRKAB1 or PRKAB2) and a gamma non-catalytic subunits (PRKAG1, PRKAG2 or PRKAG3). Interacts with FNIP1 and FNIP2. Phosphorylated by ULK1; leading to negatively regulate AMPK activity and suggesting the existence of a regulatory feedback loop between ULK1 and AMPK. Post-translationally, glycosylated; O-GlcNAcylated by OGT, promoting the AMP-activated protein kinase (AMPK) activity.

Its function is as follows. AMP/ATP-binding subunit of AMP-activated protein kinase (AMPK), an energy sensor protein kinase that plays a key role in regulating cellular energy metabolism. In response to reduction of intracellular ATP levels, AMPK activates energy-producing pathways and inhibits energy-consuming processes: inhibits protein, carbohydrate and lipid biosynthesis, as well as cell growth and proliferation. AMPK acts via direct phosphorylation of metabolic enzymes, and by longer-term effects via phosphorylation of transcription regulators. Also acts as a regulator of cellular polarity by remodeling the actin cytoskeleton; probably by indirectly activating myosin. Gamma non-catalytic subunit mediates binding to AMP, ADP and ATP, leading to activate or inhibit AMPK: AMP-binding results in allosteric activation of alpha catalytic subunit (PRKAA1 or PRKAA2) both by inducing phosphorylation and preventing dephosphorylation of catalytic subunits. ADP also stimulates phosphorylation, without stimulating already phosphorylated catalytic subunit. ATP promotes dephosphorylation of catalytic subunit, rendering the AMPK enzyme inactive. In Pongo abelii (Sumatran orangutan), this protein is 5'-AMP-activated protein kinase subunit gamma-2 (PRKAG2).